A 501-amino-acid chain; its full sequence is Lysine--tRNA ligase (501 aa).

Residues glutamate 402 and glutamate 409 each contribute to the Mg(2+) site.

It belongs to the class-II aminoacyl-tRNA synthetase family. Homodimer. It depends on Mg(2+) as a cofactor.

The protein localises to the cytoplasm. It carries out the reaction tRNA(Lys) + L-lysine + ATP = L-lysyl-tRNA(Lys) + AMP + diphosphate. The protein is Lysine--tRNA ligase of Helicobacter pylori (strain P12).